The sequence spans 742 residues: Protein-associating with the carboxyl-terminal domain of ezrin (742 aa).

G2 is lipidated: N-myristoyl glycine. The region spanning 2 to 245 (GSENSALKSY…LCTLLSHDFF (244 aa)) is the Protein kinase domain. HEAT repeat units follow at residues 199-238 (ESLLTILNEQVSADVLSSFQQTLHSTLLNPIPKCRPALCT), 285-323 (LIASRLVPLLLNQLVFAEPVAVKSFLPYLLGPKKDHAQG), 333-370 (LFQSRVIPVLLQLFEVHEEHVRMVLLSHIEAYVEHFTQ), and 372-409 (QLKKVILPQVLLGLRDTSDSIVAITLHSLAVLVSLLGP). Residue S439 is modified to Phosphoserine. Disordered regions lie at residues 506-544 (LSDVKNTSEDSENFPSSSKKSEEWPDWSEPEEPENQTVN), 568-598 (SSWDDCEPSSLDTKVNPGGGITATKPVTSGE), and 629-652 (GDDADQIEPPKVSSQERPLKVPSE). Acidic residues predominate over residues 529-539 (WPDWSEPEEPE). Residues 548-742 (WPREPCDDVK…GELNWEDNNW (195 aa)) are interaction with EZR. S707 is subject to Phosphoserine. Positions 723 to 742 (EGEAEGWEEEGELNWEDNNW) are disordered.

Belongs to the protein kinase superfamily. In terms of assembly, interacts with EZR/VIL2 C-terminal domain. In terms of processing, may be myristoylated; myristoylation may target it to Golgi compartment. Phosphorylated. As to expression, ubiquitously expressed.

The protein resides in the cytoplasm. The protein localises to the golgi apparatus. Its subcellular location is the cell projection. It localises to the lamellipodium. May play a role in regulating cell adhesion/migration complexes in migrating cells. This is Protein-associating with the carboxyl-terminal domain of ezrin (SCYL3) from Homo sapiens (Human).